The chain runs to 408 residues: Arginine biosynthesis bifunctional protein ArgJ (408 aa).

Positions 158, 184, 195, 281, 403, and 408 each coordinate substrate. Threonine 195 (nucleophile) is an active-site residue.

Belongs to the ArgJ family. As to quaternary structure, heterotetramer of two alpha and two beta chains.

The protein localises to the cytoplasm. The enzyme catalyses N(2)-acetyl-L-ornithine + L-glutamate = N-acetyl-L-glutamate + L-ornithine. It carries out the reaction L-glutamate + acetyl-CoA = N-acetyl-L-glutamate + CoA + H(+). It functions in the pathway amino-acid biosynthesis; L-arginine biosynthesis; L-ornithine and N-acetyl-L-glutamate from L-glutamate and N(2)-acetyl-L-ornithine (cyclic): step 1/1. It participates in amino-acid biosynthesis; L-arginine biosynthesis; N(2)-acetyl-L-ornithine from L-glutamate: step 1/4. Its function is as follows. Catalyzes two activities which are involved in the cyclic version of arginine biosynthesis: the synthesis of N-acetylglutamate from glutamate and acetyl-CoA as the acetyl donor, and of ornithine by transacetylation between N(2)-acetylornithine and glutamate. In Bacillus cereus (strain ZK / E33L), this protein is Arginine biosynthesis bifunctional protein ArgJ.